Consider the following 200-residue polypeptide: Probable fatty acid desaturase MIMI_L630 (200 aa).

Transmembrane regions (helical) follow at residues 9 to 29 (FIQI…YHWI) and 79 to 99 (IGPL…FIMI).

The protein belongs to the fatty acid desaturase CarF family.

It localises to the membrane. The protein is Probable fatty acid desaturase MIMI_L630 of Acanthamoeba polyphaga mimivirus (APMV).